Here is a 477-residue protein sequence, read N- to C-terminus: D(1B) dopamine receptor (477 aa).

Residues 1-39 lie on the Extracellular side of the membrane; sequence MLPPGSNGTAYPGQFALYQQLAQGNAVGGSAGAPPLGPS. Asparagine 7 carries an N-linked (GlcNAc...) asparagine glycan. Residues 40-66 traverse the membrane as a helical segment; it reads QVVTACLLTLLIIWTLLGNVLVCAAIV. The Cytoplasmic portion of the chain corresponds to 67–77; it reads RSRHLRANMTN. The chain crosses the membrane as a helical span at residues 78–104; it reads VFIVSLAVSDLFVALLVMPWKAVAEVA. Residues 105–114 lie on the Extracellular side of the membrane; the sequence is GYWPFGAFCD. Cysteine 113 and cysteine 217 are disulfide-bonded. The chain crosses the membrane as a helical span at residues 115-136; it reads VWVAFDIMCSTASILNLCVISV. Over 137–158 the chain is Cytoplasmic; it reads DRYWAISRPFRYKRKMTQRMAL. Residues 159-180 form a helical membrane-spanning segment; it reads VMVGLAWTLSILISFIPVQLNW. Residues 181-223 lie on the Extracellular side of the membrane; sequence HRDQAASWGGLDLPNNLANWTPWEEDFWEPDVNAENCDSSLNR. N-linked (GlcNAc...) asparagine glycosylation is present at asparagine 222. The chain crosses the membrane as a helical span at residues 224-246; sequence TYAISSSLISFYIPVAIMIVTYT. Over 247-296 the chain is Cytoplasmic; sequence RIYRIAQVQIRRISSLERAAEHAQSCRSSAACAPDTSLRASIKKETKVLK. Residues 297-320 traverse the membrane as a helical segment; it reads TLSVIMGVFVCCWLPFFILNCMVP. Over 321 to 340 the chain is Extracellular; sequence FCSGHPEGPPAGFPCVSETT. The helical transmembrane segment at 341-360 threads the bilayer; sequence FDVFVWFGWANSSLNPVIYA. Residues 361–477 lie on the Cytoplasmic side of the membrane; the sequence is FNADFQKVFA…ITPFTPNGFH (117 aa). A lipid anchor (S-palmitoyl cysteine) is attached at cysteine 375.

The protein belongs to the G-protein coupled receptor 1 family. Neuron-specific, localized primarily within limbic regions of the brain.

It is found in the cell membrane. Functionally, dopamine receptor whose activity is mediated by G proteins which activate adenylyl cyclase. The chain is D(1B) dopamine receptor (DRD5) from Homo sapiens (Human).